The sequence spans 774 residues: Alpha,alpha-trehalose phosphorylase (774 aa).

Residue 369–370 (WD) coordinates substrate. Residue Glu-498 is the Proton donor of the active site. Substrate is bound at residue 610 to 611 (KQ).

The protein belongs to the glycosyl hydrolase 65 family. In terms of assembly, homodimer.

The enzyme catalyses alpha,alpha-trehalose + phosphate = beta-D-glucose 1-phosphate + D-glucose. It functions in the pathway glycan degradation; trehalose degradation. With respect to regulation, inhibited by Cu(2+), Hg(2+), Mg(2+), Mn(2+), Pb(2+) and Zn(2+). Catalyzes the reversible phosphorolytic cleavage of trehalose. Phosphorolysis is specific for trehalose, but D-xylose, D-galactose, L-arabinose, D-fucose, L-fucose, D-glucosamine and 2-deoxy D-glucose can act as substitutes for D-glucose in the synthetic reaction. This Thermoanaerobacter brockii (Thermoanaerobium brockii) protein is Alpha,alpha-trehalose phosphorylase (treP).